The chain runs to 64 residues: Alpha-mammal toxin Lqq5 (64 aa).

One can recognise an LCN-type CS-alpha/beta domain in the interval 2–64; sequence KDGYIVDDKN…VSIKEKGRCN (63 aa). 4 disulfides stabilise this stretch: Cys-12–Cys-63, Cys-16–Cys-36, Cys-22–Cys-46, and Cys-26–Cys-48. Asn-64 bears the Asparagine amide mark.

This sequence belongs to the long (4 C-C) scorpion toxin superfamily. Sodium channel inhibitor family. Alpha subfamily. In terms of tissue distribution, expressed by the venom gland.

The protein localises to the secreted. Its function is as follows. Alpha toxins bind voltage-independently at site-3 of sodium channels (Nav) and inhibit the inactivation of the activated channels, thereby blocking neuronal transmission. Is active on mammals and bind with high affinity to rat brain synaptosome. Does not display phospholipid-binding activity. The sequence is that of Alpha-mammal toxin Lqq5 from Leiurus quinquestriatus quinquestriatus (Egyptian scorpion).